A 690-amino-acid polypeptide reads, in one-letter code: Xylosyl- and glucuronyltransferase LARGE2 (690 aa).

The Cytoplasmic portion of the chain corresponds to 1–8; it reads MLPRGRPR. A helical; Signal-anchor for type II membrane protein membrane pass occupies residues 9-29; sequence AMGAAVLLLLLLLVVGFFLFG. Over 30 to 690 the chain is Lumenal; that stretch reads RDPDYGLGTT…TALQQARSRA (661 aa). 2 N-linked (GlcNAc...) asparagine glycosylation sites follow: Asn-51 and Asn-78. A xylosyltransferase activity region spans residues 68 to 343; that stretch reads LHVAIVCAGY…FLGYDGKLLR (276 aa). The Mn(2+) site is built by Asp-172 and Asp-174. Residue Asn-202 is glycosylated (N-linked (GlcNAc...) asparagine). The interval 344–686 is glucuronyltransferase activity; sequence RELFGCPNQF…LKYLTALQQA (343 aa). Positions 492 and 494 each coordinate Mn(2+).

The protein in the C-terminal section; belongs to the glycosyltransferase 49 family. This sequence in the N-terminal section; belongs to the glycosyltransferase 8 family. Belongs to the glycosyltransferase 8 family. Interacts with B4GAT1. Requires Mn(2+) as cofactor. Highly expressed in the testis and kidney, but weakly expressed in the heart and brain. Expressed during embryogenesis from 7 dpc.

Its subcellular location is the golgi apparatus membrane. The enzyme catalyses 3-O-[beta-D-GlcA-(1-&gt;3)-beta-D-Xyl-(1-&gt;4)-Rib-ol-P-Rib-ol-P-3-beta-D-GalNAc-(1-&gt;3)-beta-D-GlcNAc-(1-&gt;4)-(O-6-P-alpha-D-Man)]-Thr-[protein] + UDP-alpha-D-xylose = 3-O-[alpha-D-Xyl-(1-&gt;3)-beta-D-GlcA-(1-&gt;4)-beta-D-Xyl-(1-&gt;4)-Rib-ol-P-Rib-ol-P-3-beta-D-GalNAc-(1-&gt;3)-beta-D-GlcNAc-(1-&gt;4)-(O-6-P-alpha-D-Man)]-Thr-[protein] + UDP + H(+). The catalysed reaction is 3-O-{(1-&gt;[3)-alpha-D-Xyl-(1-&gt;3)-beta-D-GlcA-(1-&gt;](n)-4)-beta-D-Xyl-(1-&gt;4)-Rib-ol-P-Rib-ol-P-3-beta-D-GalNAc-(1-&gt;3)-beta-D-GlcNAc-(1-&gt;4)-O-6-P-alpha-D-Man}-L-Thr-[protein] + UDP-alpha-D-glucuronate = 3-O-{beta-D-GlcA-(1-&gt;[3)-alpha-D-Xyl-(1-&gt;3)-beta-D-GlcA-(1-&gt;](n)-4)-beta-D-Xyl-(1-&gt;4)-Rib-ol-P-Rib-ol-P-3-beta-D-GalNAc-(1-&gt;3)-beta-D-GlcNAc-(1-&gt;4)-O-6-P-alpha-D-Man}-L-Thr-[protein] + UDP + H(+). It catalyses the reaction 3-O-{beta-D-GlcA-(1-&gt;[3)-alpha-D-Xyl-(1-&gt;3)-beta-D-GlcA-(1-&gt;](n)-4)-beta-D-Xyl-(1-&gt;4)-Rib-ol-P-Rib-ol-P-3-beta-D-GalNAc-(1-&gt;3)-beta-D-GlcNAc-(1-&gt;4)-O-6-P-alpha-D-Man}-L-Thr-[protein] + UDP-alpha-D-xylose = 3-O-{(1-&gt;[3)-alpha-D-Xyl-(1-&gt;3)-beta-D-GlcA-(1-&gt;](n+1)-4)-beta-D-Xyl-(1-&gt;4)-Rib-ol-P-Rib-ol-P-3-beta-D-GalNAc-(1-&gt;3)-beta-D-GlcNAc-(1-&gt;4)-O-6-P-alpha-D-Man}-L-Thr-[protein] + UDP + H(+). It participates in protein modification; protein glycosylation. Its function is as follows. Bifunctional glycosyltransferase with both alpha-1,3-xylosyltransferase and beta-1,3-glucuronyltransferase activities involved in the maturation of alpha-dystroglycan (DAG1) by glycosylation leading to DAG1 binding to laminin G-like domain-containing extracellular proteins with high affinity and in a phosphorylated-O-mannosyl trisaccharide dependent manner. Elongates the glucuronyl-beta-1,4-xylose-beta disaccharide primer structure by adding repeating units [-3-Xylose-alpha-1,3-GlcA-beta-1-] to produce a heteropolysaccharide. Supports the maturation of DAG1 more effectively than LARGE1. In addition, can modify both heparan sulfate (HS)- and chondroitin/dermatan sulfate (CS/DS)-proteoglycans (PGs), namely GPC4, with a glycosaminoglycan (GAG)-like polysaccharide composed of xylose and glucuronic acid to confer laminin binding. The sequence is that of Xylosyl- and glucuronyltransferase LARGE2 from Mus musculus (Mouse).